Here is a 349-residue protein sequence, read N- to C-terminus: Quinone oxidoreductase-like protein 1 (349 aa).

It belongs to the zinc-containing alcohol dehydrogenase family. Quinone oxidoreductase subfamily. As to quaternary structure, homodimer. Component of the FERRY complex composed of five subunits, TBCK, PPP1R21, FERRY3, CRYZL1 and GATD1 with a ratio of 1:2:1:2:4, respectively. In terms of tissue distribution, ubiquitous.

Its subcellular location is the early endosome. Component of the FERRY complex (Five-subunit Endosomal Rab5 and RNA/ribosome intermediary). The FERRY complex directly interacts with mRNAs and RAB5A, and functions as a RAB5A effector involved in the localization and the distribution of specific mRNAs most likely by mediating their endosomal transport. The complex recruits mRNAs and ribosomes to early endosomes through direct mRNA-interaction. The polypeptide is Quinone oxidoreductase-like protein 1 (CRYZL1) (Homo sapiens (Human)).